The following is a 295-amino-acid chain: Nucleotide-binding protein Sare_3328 (295 aa).

An ATP-binding site is contributed by 19–26 (GVSGGGRS). Position 70–73 (70–73 (DVRS)) interacts with GTP.

This sequence belongs to the RapZ-like family.

Displays ATPase and GTPase activities. In Salinispora arenicola (strain CNS-205), this protein is Nucleotide-binding protein Sare_3328.